Reading from the N-terminus, the 84-residue chain is Putative membrane protein insertion efficiency factor (84 aa).

This sequence belongs to the UPF0161 family.

The protein localises to the cell inner membrane. Its function is as follows. Could be involved in insertion of integral membrane proteins into the membrane. The sequence is that of Putative membrane protein insertion efficiency factor from Acidiphilium cryptum (strain JF-5).